The chain runs to 123 residues: Venom protein 29 (123 aa).

The signal sequence occupies residues 1–18; the sequence is MNKLFLFTLLVTLWSVKG.

Post-translationally, contains 3 disulfide bonds. As to expression, expressed by the venom gland.

The protein resides in the secreted. The sequence is that of Venom protein 29 from Lychas mucronatus (Chinese swimming scorpion).